Consider the following 298-residue polypeptide: 4-diphosphocytidyl-2-C-methyl-D-erythritol kinase (298 aa).

Residue Lys15 is part of the active site. Residue 100 to 110 (PIAAGIGGGSA) participates in ATP binding. Asp142 is a catalytic residue.

It belongs to the GHMP kinase family. IspE subfamily.

The catalysed reaction is 4-CDP-2-C-methyl-D-erythritol + ATP = 4-CDP-2-C-methyl-D-erythritol 2-phosphate + ADP + H(+). It functions in the pathway isoprenoid biosynthesis; isopentenyl diphosphate biosynthesis via DXP pathway; isopentenyl diphosphate from 1-deoxy-D-xylulose 5-phosphate: step 3/6. In terms of biological role, catalyzes the phosphorylation of the position 2 hydroxy group of 4-diphosphocytidyl-2C-methyl-D-erythritol. This is 4-diphosphocytidyl-2-C-methyl-D-erythritol kinase from Rhodopseudomonas palustris (strain BisA53).